The primary structure comprises 594 residues: 3-hydroxy-3-methylglutaryl coenzyme A reductase 2-A (594 aa).

The interval 1–32 is disordered; sequence MDVRRRPVKSLSSAKTATAGEPPKSQQQHPKA. At 1-37 the chain is on the lumenal side; sequence MDVRRRPVKSLSSAKTATAGEPPKSQQQHPKASDALP. Residues 38 to 58 form a helical membrane-spanning segment; it reads LPLYLTNGLFFTMFFSVMYFL. The Cytoplasmic segment spans residues 59–81; the sequence is LHRWREKIRNSTPLHVVTLSELA. The chain crosses the membrane as a helical span at residues 82 to 102; the sequence is ALVLLMASVIYLLGFFGIGFV. The Lumenal portion of the chain corresponds to 103–549; sequence RSVIRPSPDA…SKESPGSNSR (447 aa). N-linked (GlcNAc...) asparagine glycosylation is present at Asn-261. The active-site Charge relay system is Glu-273. Asn-337 is a glycosylation site (N-linked (GlcNAc...) asparagine). Residues Lys-405 and Asp-481 each act as charge relay system in the active site. Residues 550–570 form a helical membrane-spanning segment; it reads LLASIVAGSVLAGELSLMSAL. Topologically, residues 571–594 are cytoplasmic; the sequence is AAGQLVKSHMKYNRSSKDITKLSS. Residue His-579 is the Proton donor of the active site.

It belongs to the HMG-CoA reductase family. In terms of tissue distribution, mostly expressed in the petioles of seedlings, seedlings and roots, and, to a lower extent, in seeds, leaves, stems and flowers.

Its subcellular location is the endoplasmic reticulum membrane. The protein resides in the plastid. The protein localises to the chloroplast membrane. It localises to the peroxisome membrane. It carries out the reaction (R)-mevalonate + 2 NADP(+) + CoA = (3S)-3-hydroxy-3-methylglutaryl-CoA + 2 NADPH + 2 H(+). Its pathway is metabolic intermediate biosynthesis; (R)-mevalonate biosynthesis; (R)-mevalonate from acetyl-CoA: step 3/3. Competitive inhibition by mevinolin (Mev) is leading to a significant reduction of total ginsenoside in adventitious roots. Triggered by darkness. Its function is as follows. Catalyzes the synthesis of mevalonate, the specific precursor of all isoprenoid compounds present in plants. Component of the triterpene saponins (e.g. ginsenosides or panaxosides) and phytosterols biosynthetic pathways. This chain is 3-hydroxy-3-methylglutaryl coenzyme A reductase 2-A, found in Panax ginseng (Korean ginseng).